The primary structure comprises 500 residues: Cysteine--tRNA ligase (500 aa).

Cysteine 29 serves as a coordination point for Zn(2+). A 'HIGH' region motif is present at residues 31–41 (VTVYDLCHLGH). Cysteine 213, histidine 238, and glutamate 242 together coordinate Zn(2+). The 'KMSKS' region signature appears at 270 to 274 (KMSKS). Lysine 273 contributes to the ATP binding site.

The protein belongs to the class-I aminoacyl-tRNA synthetase family. Monomer. Zn(2+) serves as cofactor.

Its subcellular location is the cytoplasm. The enzyme catalyses tRNA(Cys) + L-cysteine + ATP = L-cysteinyl-tRNA(Cys) + AMP + diphosphate. The chain is Cysteine--tRNA ligase from Prochlorococcus marinus (strain NATL2A).